Consider the following 278-residue polypeptide: Bifunctional protein FolD (278 aa).

Residues 165–167 (GRS) and Ser-190 each bind NADP(+).

Belongs to the tetrahydrofolate dehydrogenase/cyclohydrolase family. Homodimer.

The catalysed reaction is (6R)-5,10-methylene-5,6,7,8-tetrahydrofolate + NADP(+) = (6R)-5,10-methenyltetrahydrofolate + NADPH. It carries out the reaction (6R)-5,10-methenyltetrahydrofolate + H2O = (6R)-10-formyltetrahydrofolate + H(+). Its pathway is one-carbon metabolism; tetrahydrofolate interconversion. Its function is as follows. Catalyzes the oxidation of 5,10-methylenetetrahydrofolate to 5,10-methenyltetrahydrofolate and then the hydrolysis of 5,10-methenyltetrahydrofolate to 10-formyltetrahydrofolate. The protein is Bifunctional protein FolD of Clostridium tetani (strain Massachusetts / E88).